The chain runs to 419 residues: UDP-N-acetylglucosamine 1-carboxyvinyltransferase 2 (419 aa).

Position 24 to 25 (lysine 24 to asparagine 25) interacts with phosphoenolpyruvate. Arginine 94 is a binding site for UDP-N-acetyl-alpha-D-glucosamine. Residue cysteine 118 is the Proton donor of the active site. Cysteine 118 carries the 2-(S-cysteinyl)pyruvic acid O-phosphothioketal modification. Residues arginine 123–glutamine 127, aspartate 307, and isoleucine 329 contribute to the UDP-N-acetyl-alpha-D-glucosamine site.

Belongs to the EPSP synthase family. MurA subfamily.

It localises to the cytoplasm. The catalysed reaction is phosphoenolpyruvate + UDP-N-acetyl-alpha-D-glucosamine = UDP-N-acetyl-3-O-(1-carboxyvinyl)-alpha-D-glucosamine + phosphate. It functions in the pathway cell wall biogenesis; peptidoglycan biosynthesis. Its function is as follows. Cell wall formation. Adds enolpyruvyl to UDP-N-acetylglucosamine. This Staphylococcus epidermidis (strain ATCC 12228 / FDA PCI 1200) protein is UDP-N-acetylglucosamine 1-carboxyvinyltransferase 2.